Consider the following 101-residue polypeptide: MAGQKIRIRLKAYDHEAIDASAKKIVETVTRTGARVVGPVPLPTEKNVYCVIRSPHKYKDSREHFEMRTHKRLIDILDPTPKTVDALMRIDLPASVDVNIQ.

It belongs to the universal ribosomal protein uS10 family. In terms of assembly, part of the 30S ribosomal subunit.

Functionally, involved in the binding of tRNA to the ribosomes. The sequence is that of Small ribosomal subunit protein uS10 from Corynebacterium jeikeium (strain K411).